We begin with the raw amino-acid sequence, 243 residues long: Carboxy-S-adenosyl-L-methionine synthase (243 aa).

S-adenosyl-L-methionine is bound by residues Tyr-35, 68–70, 92–93, and Arg-199; these read GCS and DN.

The protein belongs to the class I-like SAM-binding methyltransferase superfamily. Cx-SAM synthase family. As to quaternary structure, homodimer.

It carries out the reaction prephenate + S-adenosyl-L-methionine = carboxy-S-adenosyl-L-methionine + 3-phenylpyruvate + H2O. In terms of biological role, catalyzes the conversion of S-adenosyl-L-methionine (SAM) to carboxy-S-adenosyl-L-methionine (Cx-SAM). This chain is Carboxy-S-adenosyl-L-methionine synthase, found in Helicobacter pylori (strain J99 / ATCC 700824) (Campylobacter pylori J99).